We begin with the raw amino-acid sequence, 202 residues long: Chromophore lyase CpcT/CpeT 2 (202 aa).

The protein belongs to the CpcT/CpeT biliprotein lyase family.

Its function is as follows. Covalently attaches a chromophore to Cys residue(s) of phycobiliproteins. In Gloeobacter violaceus (strain ATCC 29082 / PCC 7421), this protein is Chromophore lyase CpcT/CpeT 2.